Reading from the N-terminus, the 265-residue chain is Zinc import ATP-binding protein ZnuC (265 aa).

The ABC transporter domain occupies 6–221 (IRLEQVAVTL…PAFVELFGKN (216 aa)). An ATP-binding site is contributed by 38-45 (GPNGAGKT). The disordered stretch occupies residues 245–265 (DAPATSSHTHTHVHGDHCKHG).

The protein belongs to the ABC transporter superfamily. Zinc importer (TC 3.A.1.15.5) family. The complex is composed of two ATP-binding proteins (ZnuC), two transmembrane proteins (ZnuB) and a solute-binding protein (ZnuA).

The protein resides in the cell inner membrane. It carries out the reaction Zn(2+)(out) + ATP(in) + H2O(in) = Zn(2+)(in) + ADP(in) + phosphate(in) + H(+)(in). Its function is as follows. Part of the ABC transporter complex ZnuABC involved in zinc import. Responsible for energy coupling to the transport system. In Pseudomonas savastanoi pv. phaseolicola (strain 1448A / Race 6) (Pseudomonas syringae pv. phaseolicola (strain 1448A / Race 6)), this protein is Zinc import ATP-binding protein ZnuC.